A 432-amino-acid chain; its full sequence is MVNEQIIDISGPLKGEIEVPGDKSMTHRAIMLASLAEGVSTIYKPLLGEDCRRTMDIFRLLGVDIKEDEDKLVVNSPGYKAFKTPHQVLYTGNSGTTTRLLAGLLSGLGIESVLSGDVSIGKRPMDRVLRPLKSMNANIEGIEDNYTPLIIKPSVIKGINYKMEVASAQVKSAILFASLFSKEATIIKELDVSRNHTETMFRHFNIPIEAEGLSITTIPEAIRYIKPADFHVPGDISSAAFFIVAALITPGSDVTIHNVGINPTRSGIIDIVEKMGGNIQLFNQTTGAEPTASIRIQYTPMLQPIKIEGELVPKAIDELPVIALLCTQAVGTSTIKDAEELKVKETNRIDTTADMLNLLGFELQPTNDGLIIHPSEFKTNATVDSLTDHRIGMMLAVASLLSSEPVKIKQFDAVNVSFPGFLPKLKLLENEG.

Lysine 23, serine 24, and arginine 28 together coordinate 3-phosphoshikimate. Position 23 (lysine 23) interacts with phosphoenolpyruvate. Phosphoenolpyruvate contacts are provided by glycine 95 and arginine 123. Residues serine 167, glutamine 169, aspartate 317, and lysine 344 each coordinate 3-phosphoshikimate. Residue glutamine 169 participates in phosphoenolpyruvate binding. Aspartate 317 serves as the catalytic Proton acceptor. Positions 348 and 390 each coordinate phosphoenolpyruvate.

Belongs to the EPSP synthase family. Monomer.

It localises to the cytoplasm. The catalysed reaction is 3-phosphoshikimate + phosphoenolpyruvate = 5-O-(1-carboxyvinyl)-3-phosphoshikimate + phosphate. The protein operates within metabolic intermediate biosynthesis; chorismate biosynthesis; chorismate from D-erythrose 4-phosphate and phosphoenolpyruvate: step 6/7. Catalyzes the transfer of the enolpyruvyl moiety of phosphoenolpyruvate (PEP) to the 5-hydroxyl of shikimate-3-phosphate (S3P) to produce enolpyruvyl shikimate-3-phosphate and inorganic phosphate. This Staphylococcus aureus (strain MRSA252) protein is 3-phosphoshikimate 1-carboxyvinyltransferase.